The chain runs to 465 residues: MKIVVSRGLDLSLKGAPKESGFCGKVDPTYVSVDLRPFAPLPLEVKVTPGDQVTAGSPLAEYKLFSGVFITSPVDGEVVEIRRGNKRALLEIVIKKKPGISQTKFSYDLQSLTQKDLLEVFKKEGLFALFKQRPFDIPALPTQSPRDVFINLADNRPFTPSVEKHLSLFSSKEDGYYIFVVGVQAIAKLFGLKPHIISTDRLTLPTQDLVSIAHLHTIDGPFPSGSPSTHIHHIARIRNERDVVFTISFQEVLSIGHLFLKGFVLGQQIVALAGSALPPSQRKYLITAKGASFSDLLPKDIFSSDEITLISGDPLTGRLCKKEENPCLGMRDHTITLLPNPKTRESFSFLRLGWNKLTVTRTYLSGFFKRKRVFMDMDTNMHGEKRPIIDAEIYERVSAIPVPVALIIKALETQNFEEACRLGLLEVAPEDFALPTFIDPSKTEMFSIVKESLLRYAKENVVTSS.

Belongs to the NqrA family. As to quaternary structure, composed of six subunits; NqrA, NqrB, NqrC, NqrD, NqrE and NqrF.

The catalysed reaction is a ubiquinone + n Na(+)(in) + NADH + H(+) = a ubiquinol + n Na(+)(out) + NAD(+). NQR complex catalyzes the reduction of ubiquinone-1 to ubiquinol by two successive reactions, coupled with the transport of Na(+) ions from the cytoplasm to the periplasm. NqrA to NqrE are probably involved in the second step, the conversion of ubisemiquinone to ubiquinol. The polypeptide is Na(+)-translocating NADH-quinone reductase subunit A (Chlamydia trachomatis serovar L2 (strain ATCC VR-902B / DSM 19102 / 434/Bu)).